We begin with the raw amino-acid sequence, 334 residues long: uncharacterized protein (334 aa).

Ser-126 contacts substrate. The Proton acceptor role is filled by Tyr-151.

It belongs to the NAD(P)-dependent epimerase/dehydratase family. dTDP-glucose dehydratase subfamily.

This is an uncharacterized protein from Escherichia coli O111:H-.